The chain runs to 32 residues: Cytochrome b6-f complex subunit 6 (32 aa).

Residues 4–26 (ITSYVGLLFTALGFTLGLYFGLT) form a helical membrane-spanning segment.

It belongs to the PetL family. As to quaternary structure, the 4 large subunits of the cytochrome b6-f complex are cytochrome b6, subunit IV (17 kDa polypeptide, PetD), cytochrome f and the Rieske protein, while the 4 small subunits are PetG, PetL, PetM and PetN. The complex functions as a dimer.

Its subcellular location is the plastid. It is found in the chloroplast thylakoid membrane. Functionally, component of the cytochrome b6-f complex, which mediates electron transfer between photosystem II (PSII) and photosystem I (PSI), cyclic electron flow around PSI, and state transitions. PetL is important for photoautotrophic growth as well as for electron transfer efficiency and stability of the cytochrome b6-f complex. This chain is Cytochrome b6-f complex subunit 6, found in Tetradesmus obliquus (Green alga).